A 265-amino-acid chain; its full sequence is ClpXP adapter protein SpxH (265 aa).

The protein belongs to the SpxH family. As to quaternary structure, interacts with Spx.

The protein resides in the cytoplasm. Its function is as follows. Adapter protein required for efficient degradation of Spx by ClpXP under non-stress conditions. Interaction with Spx stabilizes Spx and exposes the C-terminus of Spx for recognition and proteolysis by ClpXP. The protein is ClpXP adapter protein SpxH of Staphylococcus epidermidis (strain ATCC 35984 / DSM 28319 / BCRC 17069 / CCUG 31568 / BM 3577 / RP62A).